The sequence spans 116 residues: Large ribosomal subunit protein bL21c (116 aa).

It belongs to the bacterial ribosomal protein bL21 family. In terms of assembly, part of the 50S ribosomal subunit.

It is found in the plastid. The protein localises to the chloroplast. This protein binds to 23S rRNA. This is Large ribosomal subunit protein bL21c from Marchantia polymorpha (Common liverwort).